We begin with the raw amino-acid sequence, 458 residues long: Glycine--tRNA ligase (458 aa).

Residues R97 and E171 each coordinate substrate. Residues 203 to 205, 213 to 218, 287 to 288, and 331 to 334 each bind ATP; these read RNE, FRTREF, EL, and GADR. Position 218–222 (218–222) interacts with substrate; that stretch reads FEQME. 327–331 contributes to the substrate binding site; sequence EPSLG.

This sequence belongs to the class-II aminoacyl-tRNA synthetase family. In terms of assembly, homodimer.

The protein localises to the cytoplasm. The catalysed reaction is tRNA(Gly) + glycine + ATP = glycyl-tRNA(Gly) + AMP + diphosphate. Catalyzes the attachment of glycine to tRNA(Gly). The sequence is that of Glycine--tRNA ligase from Bacillus anthracis.